The chain runs to 111 residues: ATP-dependent Clp protease adapter protein ClpS (111 aa).

It belongs to the ClpS family. As to quaternary structure, binds to the N-terminal domain of the chaperone ClpA.

Its function is as follows. Involved in the modulation of the specificity of the ClpAP-mediated ATP-dependent protein degradation. The protein is ATP-dependent Clp protease adapter protein ClpS of Legionella pneumophila (strain Paris).